The primary structure comprises 219 residues: Probable GTP-binding protein EngB (219 aa).

The EngB-type G domain maps to 31-205 (VGVEIAFAGR…LSILNEWCHP (175 aa)). Residues 39 to 46 (GRSNAGKS), 66 to 70 (GRTQL), 84 to 87 (DLPG), 151 to 154 (TKSD), and 184 to 186 (FSA) contribute to the GTP site. Positions 46 and 68 each coordinate Mg(2+).

This sequence belongs to the TRAFAC class TrmE-Era-EngA-EngB-Septin-like GTPase superfamily. EngB GTPase family. Mg(2+) serves as cofactor.

Necessary for normal cell division and for the maintenance of normal septation. The polypeptide is Probable GTP-binding protein EngB (Shewanella sp. (strain W3-18-1)).